The sequence spans 161 residues: MAGILRLVVQWPPGRLQTVTKGVESLICTDWIRHKFTRSRIPEKVFQASPEDHEKYGGDPQNPHKLHIVTRIKSTRRRPYWEKDIIKMLGLEKAHTPQVHKNIPSVNAKLKVVKHLIRIKPLKLPQGLPAEENMSNTCLKSTGELVVQWHLKPVEQKAHES.

The transit peptide at 1–34 directs the protein to the mitochondrion; sequence MAGILRLVVQWPPGRLQTVTKGVESLICTDWIRH.

This sequence belongs to the universal ribosomal protein uL30 family. In terms of assembly, component of the mitochondrial large ribosomal subunit (mt-LSU). Mature mammalian 55S mitochondrial ribosomes consist of a small (28S) and a large (39S) subunit. The 28S small subunit contains a 12S ribosomal RNA (12S mt-rRNA) and 30 different proteins. The 39S large subunit contains a 16S rRNA (16S mt-rRNA), a copy of mitochondrial valine transfer RNA (mt-tRNA(Val)), which plays an integral structural role, and 52 different proteins.

It localises to the mitochondrion. The protein is Large ribosomal subunit protein uL30m (MRPL30) of Homo sapiens (Human).